We begin with the raw amino-acid sequence, 152 residues long: MTCTDQKSHSQRALGTQTPALQGPQLLNTDPSSEETRPPHVYPDRLCHMEPANHFWHAGDLQAMTSKEFHLAATQDDCRKGRTQEDILVPSSHPELFSSVLPMALEEAARLQQPQPLPPPSGIHLSASRTSAPTLLYSPPPSHSPFGLSSLI.

The segment covering 1–31 (MTCTDQKSHSQRALGTQTPALQGPQLLNTDP) has biased composition (polar residues). Disordered stretches follow at residues 1 to 39 (MTCTDQKSHSQRALGTQTPALQGPQLLNTDPSSEETRPP) and 132 to 152 (APTLLYSPPPSHSPFGLSSLI).

This chain is Psoriasis susceptibility 1 candidate gene 1 protein homolog (PSORS1C1), found in Pan troglodytes (Chimpanzee).